The following is a 156-amino-acid chain: Small ribosomal subunit protein uS7 (156 aa).

Belongs to the universal ribosomal protein uS7 family. Part of the 30S ribosomal subunit. Contacts proteins S9 and S11.

One of the primary rRNA binding proteins, it binds directly to 16S rRNA where it nucleates assembly of the head domain of the 30S subunit. Is located at the subunit interface close to the decoding center, probably blocks exit of the E-site tRNA. The chain is Small ribosomal subunit protein uS7 from Rhizobium etli (strain ATCC 51251 / DSM 11541 / JCM 21823 / NBRC 15573 / CFN 42).